Consider the following 494-residue polypeptide: Guanosine-5'-triphosphate,3'-diphosphate pyrophosphatase (494 aa).

It belongs to the GppA/Ppx family. GppA subfamily.

It carries out the reaction guanosine 3'-diphosphate 5'-triphosphate + H2O = guanosine 3',5'-bis(diphosphate) + phosphate + H(+). The protein operates within purine metabolism; ppGpp biosynthesis; ppGpp from GTP: step 2/2. Its function is as follows. Catalyzes the conversion of pppGpp to ppGpp. Guanosine pentaphosphate (pppGpp) is a cytoplasmic signaling molecule which together with ppGpp controls the 'stringent response', an adaptive process that allows bacteria to respond to amino acid starvation, resulting in the coordinated regulation of numerous cellular activities. This is Guanosine-5'-triphosphate,3'-diphosphate pyrophosphatase from Shigella flexneri.